The following is a 327-amino-acid chain: Transcription factor bHLH71 (327 aa).

2 disordered regions span residues 46–88 (ISEI…NQRM) and 151–176 (AKLN…HQPS). Basic residues predominate over residues 65-76 (RGKKRRRRKPRV). A compositionally biased stretch (basic and acidic residues) spans 77-88 (CKNEEEAENQRM). Positions 85–136 (NQRMTHIAVERNRRRQMNQHLSVLRSLMPQPFAHKGDQASIVGGAIDFIKEL) constitute a bHLH domain. The segment covering 152-169 (KLNQSVTSSTSQDSNGEQ) has biased composition (polar residues).

Homodimer. Interacts with FAMA. Expressed in leaves, stems, and flowers.

Its subcellular location is the nucleus. Transcription factor. May be involved in the differentiation of stomatal guard cells. The protein is Transcription factor bHLH71 (BHLH71) of Arabidopsis thaliana (Mouse-ear cress).